Consider the following 422-residue polypeptide: UDP-N-acetylglucosamine 1-carboxyvinyltransferase (422 aa).

Position 22–23 (22–23 (KN)) interacts with phosphoenolpyruvate. Residue arginine 93 participates in UDP-N-acetyl-alpha-D-glucosamine binding. Cysteine 117 serves as the catalytic Proton donor. 2-(S-cysteinyl)pyruvic acid O-phosphothioketal is present on cysteine 117. UDP-N-acetyl-alpha-D-glucosamine is bound by residues 122 to 126 (RPVDL), aspartate 308, and leucine 330.

It belongs to the EPSP synthase family. MurA subfamily.

It is found in the cytoplasm. The enzyme catalyses phosphoenolpyruvate + UDP-N-acetyl-alpha-D-glucosamine = UDP-N-acetyl-3-O-(1-carboxyvinyl)-alpha-D-glucosamine + phosphate. It participates in cell wall biogenesis; peptidoglycan biosynthesis. Cell wall formation. Adds enolpyruvyl to UDP-N-acetylglucosamine. This is UDP-N-acetylglucosamine 1-carboxyvinyltransferase from Helicobacter pylori (strain J99 / ATCC 700824) (Campylobacter pylori J99).